The following is a 396-amino-acid chain: Digeranylgeranylglycerophospholipid reductase (396 aa).

The FAD site is built by Gly14, Glu33, Cys44, Gly45, Gly47, Arg100, Ala124, Glu162, Asp283, Gly295, and Ile296. 2 residues coordinate a 2,3-bis-O-(geranylgeranyl)-sn-glycerol 1-phospholipid: Lys338 and Val374.

Belongs to the geranylgeranyl reductase family. DGGGPL reductase subfamily. In terms of assembly, monomer. Requires FAD as cofactor.

The protein resides in the cell membrane. The catalysed reaction is 2,3-bis-O-(phytanyl)-sn-glycerol 1-phosphate + 8 NADP(+) = 2,3-bis-O-(geranylgeranyl)-sn-glycerol 1-phosphate + 8 NADPH + 8 H(+). It catalyses the reaction 2,3-bis-O-(phytanyl)-sn-glycerol 1-phosphate + 8 NAD(+) = 2,3-bis-O-(geranylgeranyl)-sn-glycerol 1-phosphate + 8 NADH + 8 H(+). The enzyme catalyses a 2,3-bis-O-phytanyl-sn-glycerol 1-phospholipid + 8 A = a 2,3-bis-O-(geranylgeranyl)-sn-glycerol 1-phospholipid + 8 AH2. It carries out the reaction CDP-2,3-bis-O-(geranylgeranyl)-sn-glycerol + 8 AH2 = CDP-2,3-bis-O-(phytanyl)-sn-glycerol + 8 A. The catalysed reaction is archaetidylserine + 8 AH2 = 2,3-bis-O-phytanyl-sn-glycero-3-phospho-L-serine + 8 A. It functions in the pathway membrane lipid metabolism; glycerophospholipid metabolism. In terms of biological role, is involved in the reduction of 2,3-digeranylgeranylglycerophospholipids (unsaturated archaeols) into 2,3-diphytanylglycerophospholipids (saturated archaeols) in the biosynthesis of archaeal membrane lipids. Catalyzes the formation of archaetidic acid (2,3-di-O-phytanyl-sn-glyceryl phosphate) from 2,3-di-O-geranylgeranylglyceryl phosphate (DGGGP) via the hydrogenation of each double bond of the isoprenoid chains. Can use both NADH and NADPH as electron donors. Also catalyzes the reduction of 2,3-di-O-geranylgeranylglyceryl phosphate analogs such as 2,3-di-O-phytyl-sn-glyceryl phosphate (DPHGP), 3-O-(2,3-di-O-phytyl-sn-glycero-phospho)-sn-glycerol (DPHGPG) and 2,3-di-O-phytyl-sn-glycero-phosphoethanolamine (DPHGPE). Is not active toward 2,3-di-O-geranylgeranylglycerol. Is also probably able to reduce double bonds of geranyl groups in CDP-2,3-bis-O-(geranylgeranyl)-sn-glycerol and archaetidylserine, thus acting at various stages in the biosynthesis of archaeal membrane lipids. The sequence is that of Digeranylgeranylglycerophospholipid reductase from Thermoplasma acidophilum (strain ATCC 25905 / DSM 1728 / JCM 9062 / NBRC 15155 / AMRC-C165).